The sequence spans 424 residues: MTEPPAVDRPLRRVAMISLHTSPLDQPGTGDAGGMNVYVVELSRRLADLGIAVDIFTRATSSALPAKVELVPGVTVRNVAAGPYEGLSKNELPAQLCTFARAVLRAEAIREPGYYDVIHSHYWLSGQVGLLARDRWAVPLVHTMHTMAKVKNASLADDDVPEPPARLLGEEQVVEAADRLLANTDEEAHELVTLYGAQPAKVEVVNPGVDLEVFAPGDQAAARRAVGVREDAIVLAFVGRIQPLKAPDLLIRAAARMLERQPELRDRLVVAVIGGPSGNGMEHPEAHAELARRLGVDDVTRFVKPMPRPGLADWYRAASVVCVPSYSESFGLVALEAQACGTPVVAAAVGGLTTAVTDGVTGLLVPGHGVDDFADALAAIATDPGTRETMGKAAVEHAQGFGWELTAQTTLAAYRTATETMAAE.

His-20 serves as a coordination point for 1D-myo-inositol 3-phosphate. Residues 26–27 (QP) and Gly-34 each bind UDP-N-acetyl-alpha-D-glucosamine. 1D-myo-inositol 3-phosphate-binding positions include 31–36 (DAGGMN), Lys-89, Tyr-122, Thr-146, and Arg-166. Residues Arg-240, Lys-245, and Met-306 each contribute to the UDP-N-acetyl-alpha-D-glucosamine site. Positions 315, 316, and 318 each coordinate Mg(2+). UDP-N-acetyl-alpha-D-glucosamine-binding residues include Glu-328 and Glu-336. A Mg(2+)-binding site is contributed by Thr-342.

It belongs to the glycosyltransferase group 1 family. MshA subfamily. As to quaternary structure, homodimer.

It catalyses the reaction 1D-myo-inositol 3-phosphate + UDP-N-acetyl-alpha-D-glucosamine = 1D-myo-inositol 2-acetamido-2-deoxy-alpha-D-glucopyranoside 3-phosphate + UDP + H(+). Catalyzes the transfer of a N-acetyl-glucosamine moiety to 1D-myo-inositol 3-phosphate to produce 1D-myo-inositol 2-acetamido-2-deoxy-glucopyranoside 3-phosphate in the mycothiol biosynthesis pathway. This Kribbella flavida (strain DSM 17836 / JCM 10339 / NBRC 14399) protein is D-inositol 3-phosphate glycosyltransferase.